Consider the following 707-residue polypeptide: Leucine-rich repeat neuronal protein 3 (707 aa).

An N-terminal signal peptide occupies residues 1–22 (MKDAPLQIHVLLGLAITALVQA). The region spanning 23-69 (GDKKVDCPQLCTCEIRPWFTPRSIYMEASTVDCNDLGLLNFPARLPA) is the LRRNT domain. Topologically, residues 23–626 (GDKKVDCPQL…DGKENGKSHT (604 aa)) are extracellular. LRR repeat units lie at residues 70–91 (DTQILLLQTNNIARIEHSTDFP), 93–114 (NLTGLDLSQNNLSSVTNINVQK), 117–138 (QLLSVYLEENKLTELPEKCLYG), 141–162 (NLQELYVNHNLLSAISPGAFVG), 165–186 (NLLRLHLNSNRLQMINSKWFEA), 189–210 (NLEILMLGDNPILRIKDMNFQP), 213–234 (KLRSLVIAGINLTEVPDDALVG), 237–258 (NLESISFYDNRLNKVPQVALQK), 261–282 (NLKFLDLNKNPINRIRRGDFSN), 285–304 (HLKELGINNMPELVSIDSLA), 310–332 (DLRKIEATNNPRLSYIHPNAFFR), and 335–358 (KLESLMLNSNALSALYHGTIESLP). 2 N-linked (GlcNAc...) asparagine glycosylation sites follow: Asn-93 and Asn-103. The N-linked (GlcNAc...) asparagine glycan is linked to Asn-223. The region spanning 368–421 (NPIRCDCVIRWINMNKTNIRFMEPDSLFCVDPPEFQGQNVRQVHFRDMMEICLP) is the LRRCT domain. A glycan (N-linked (GlcNAc...) asparagine) is linked at Asn-382. An Ig-like C2-type domain is found at 421-514 (PLIAPESFPS…DLKSIMIKVG (94 aa)). Cys-444 and Cys-496 are oxidised to a cystine. N-linked (GlcNAc...) asparagine glycans are attached at residues Asn-522, Asn-579, and Asn-608. Residues 523–614 (GSLNIKIRDI…QCVNVTTKSL (92 aa)) form the Fibronectin type-III domain. Residues 627-647 (VFVACVGGLLGIIGVMCLFGC) traverse the membrane as a helical segment. Residues 648 to 707 (VSQEGNCENEHSYTVNHCHKPTLAFSELYPPLINLWESSKEKPASLEVKATAIGVPTSMS) lie on the Cytoplasmic side of the membrane.

The protein localises to the membrane. This chain is Leucine-rich repeat neuronal protein 3 (Lrrn3), found in Rattus norvegicus (Rat).